A 134-amino-acid polypeptide reads, in one-letter code: Arsenate reductase (134 aa).

Active-site nucleophile residues include C11, C83, and C90. 2 disulfide bridges follow: C11-C83 and C83-C90.

It belongs to the low molecular weight phosphotyrosine protein phosphatase family. Thioredoxin-coupled ArsC subfamily.

Its subcellular location is the cytoplasm. The enzyme catalyses arsenate + [thioredoxin]-dithiol + H(+) = arsenite + [thioredoxin]-disulfide + H2O. Functionally, catalyzes the reduction of arsenate [As(V)] to arsenite [As(III)]. The protein is Arsenate reductase of Bacillus cereus (strain G9842).